Here is a 314-residue protein sequence, read N- to C-terminus: Atrochrysone carboxyl ACP thioesterase AgnL7 (314 aa).

Residues His103, His105, Asp107, and His108 each coordinate Zn(2+). The active-site Proton donor/acceptor is the Asp107.

It belongs to the metallo-beta-lactamase superfamily. It depends on Zn(2+) as a cofactor.

The catalysed reaction is atrochrysone carboxyl-[ACP] + H2O = atrochrysone carboxylate + holo-[ACP] + H(+). It functions in the pathway secondary metabolite biosynthesis. Its function is as follows. Atrochrysone carboxyl ACP thioesterase; part of the gene cluster that mediates the biosynthesis of agnestins, dihydroxy-xanthone metabolites. The pathway begins with the assembly and cyclization of atrochrysone thioester by the non-reducing polyketide synthase Agnpks1. The atrochrysone carboxyl ACP thioesterase AgnL7 then breaks the thioester bond and releases the atrochrysone carboxylic acid as the first enzyme-free intermediate. The decarboxylase AgnL1 then catalyzes the concerted decarboxylation-elimination required to convert atochrysone carboxylic acid into emodin anthrone, which is further oxidized to emodin by the anthrone oxygenase AgnL2. Emodin then undergoes reduction catalyzed by the oxidoreductase AgnL4 to yield the dihydroquinone tautomer which is the substrate for reduction by the short chain dehydrogenase AgnL6 reduction to produce hydroxyketone, followed by AgnL8 dehydration and likely spontaneous autoxidation to chrysophanol. Baeyer-Villiger oxidation by the oxidase AgnL3 leads to monodictyphenone via cleavage of the C-10/C-10a bond of chrysophanol. Alternative cleavage at the C-4a/C-10 bond of chrysophanol also leads to the formation some cephalone F. Further conversion to agnestins A and B, requires reduction to dihydro-monodictyphenone, oxidation to agnestin C probably via an epoxide, and rearrangement to either agnestin A or agnestin B directly, although agnestin A or agnestin B can also interconvert. Within the cluster, AgnR1 is the only unassigned oxidoreductase present which could be involved in this conversion. However, AgnR1 seems not to be involved in this step, and thus genes involved in the proposed oxidation/reduction may be located elsewhere on the genome. Further agnestin A derivatives are probably formed by spontaneous decarboxylations, dehydrations and methanolysis reactions. The polypeptide is Atrochrysone carboxyl ACP thioesterase AgnL7 (Paecilomyces divaricatus (Penicillium divaricatum)).